Here is a 409-residue protein sequence, read N- to C-terminus: Autotransproter heptosyltransferase BAHTCr (409 aa).

ADP-D-glycero-beta-D-manno-heptose contacts are provided by Thr-107, Leu-108, and Gly-109. Asp-110 acts as the Proton acceptor in catalysis. Residues Gln-224, Thr-226, Lys-230, Arg-257, Gly-302, and Glu-326 each coordinate ADP-D-glycero-beta-D-manno-heptose. Cys-339, Cys-342, Cys-358, and Cys-370 together coordinate Fe(3+).

Belongs to the glycosyltransferase 9 family. In terms of assembly, homododecamer composed of 6 homodimers forming a ring. It depends on Fe(3+) as a cofactor.

It localises to the cytoplasm. The enzyme catalyses ADP-D-glycero-beta-D-manno-heptose + L-seryl-[protein] = O-(D-glycero-alpha-D-manno-heptosyl)-L-seryl-[protein] + ADP + H(+). It carries out the reaction ADP-L-glycero-beta-D-manno-heptose + L-seryl-[protein] = O-(L-glycero-alpha-D-manno-heptosyl)-L-seryl-[protein] + ADP + H(+). Functionally, glycosylates autotransporter CARC. By glycosylating CARC, involved in the colonization of the mouse host gastrointestinal tract. The chain is Autotransproter heptosyltransferase BAHTCr from Citrobacter rodentium (strain ICC168) (Citrobacter freundii biotype 4280).